The chain runs to 548 residues: (2S)-methylsuccinyl-CoA dehydrogenase (548 aa).

FAD contacts are provided by residues 282–291 (AVFTEPNTGS) and 315–317 (WIT). Ser-291 is a substrate binding site. 409 to 412 (ESAR) is a substrate binding site. Residues Arg-437 and 505 to 509 (QIHGG) each bind FAD. Glu-532 serves as the catalytic Proton acceptor. An FAD-binding site is contributed by 534–536 (AAE).

The protein belongs to the acyl-CoA dehydrogenase family. Homodimer. It depends on FAD as a cofactor.

The catalysed reaction is (2S)-methylsuccinyl-CoA + oxidized [electron-transfer flavoprotein] + H(+) = 2-methylfumaryl-CoA + reduced [electron-transfer flavoprotein]. Involved in the ethylmalonyl-CoA pathway, a new acetyl-CoA assimilation strategy that operates in a number of bacteria and replaces the glyoxylate cycle. Catalyzes the oxidation of (2S)-methylsuccinyl-CoA to yield mesaconyl-(C1)-CoA. Highly specific for (S)-methylsuccinyl-CoA. The protein is (2S)-methylsuccinyl-CoA dehydrogenase of Cereibacter sphaeroides (Rhodobacter sphaeroides).